The primary structure comprises 333 residues: Phenylalanine--tRNA ligase alpha subunit (333 aa).

Glutamate 254 is a binding site for Mg(2+).

The protein belongs to the class-II aminoacyl-tRNA synthetase family. Phe-tRNA synthetase alpha subunit type 1 subfamily. As to quaternary structure, tetramer of two alpha and two beta subunits. Mg(2+) is required as a cofactor.

The protein localises to the cytoplasm. The catalysed reaction is tRNA(Phe) + L-phenylalanine + ATP = L-phenylalanyl-tRNA(Phe) + AMP + diphosphate + H(+). The sequence is that of Phenylalanine--tRNA ligase alpha subunit from Xylella fastidiosa (strain M23).